The sequence spans 256 residues: Imidazole glycerol phosphate synthase subunit HisF (256 aa).

Catalysis depends on residues Asp12 and Asp131.

It belongs to the HisA/HisF family. Heterodimer of HisH and HisF.

It localises to the cytoplasm. The enzyme catalyses 5-[(5-phospho-1-deoxy-D-ribulos-1-ylimino)methylamino]-1-(5-phospho-beta-D-ribosyl)imidazole-4-carboxamide + L-glutamine = D-erythro-1-(imidazol-4-yl)glycerol 3-phosphate + 5-amino-1-(5-phospho-beta-D-ribosyl)imidazole-4-carboxamide + L-glutamate + H(+). Its pathway is amino-acid biosynthesis; L-histidine biosynthesis; L-histidine from 5-phospho-alpha-D-ribose 1-diphosphate: step 5/9. Functionally, IGPS catalyzes the conversion of PRFAR and glutamine to IGP, AICAR and glutamate. The HisF subunit catalyzes the cyclization activity that produces IGP and AICAR from PRFAR using the ammonia provided by the HisH subunit. The polypeptide is Imidazole glycerol phosphate synthase subunit HisF (Pseudomonas paraeruginosa (strain DSM 24068 / PA7) (Pseudomonas aeruginosa (strain PA7))).